A 251-amino-acid polypeptide reads, in one-letter code: Aspartate/glutamate leucyltransferase (251 aa).

Belongs to the R-transferase family. Bpt subfamily.

It localises to the cytoplasm. It carries out the reaction N-terminal L-glutamyl-[protein] + L-leucyl-tRNA(Leu) = N-terminal L-leucyl-L-glutamyl-[protein] + tRNA(Leu) + H(+). The catalysed reaction is N-terminal L-aspartyl-[protein] + L-leucyl-tRNA(Leu) = N-terminal L-leucyl-L-aspartyl-[protein] + tRNA(Leu) + H(+). Its function is as follows. Functions in the N-end rule pathway of protein degradation where it conjugates Leu from its aminoacyl-tRNA to the N-termini of proteins containing an N-terminal aspartate or glutamate. The protein is Aspartate/glutamate leucyltransferase of Stenotrophomonas maltophilia (strain K279a).